A 314-amino-acid polypeptide reads, in one-letter code: Small ribosomal subunit biogenesis GTPase RsgA (314 aa).

The CP-type G domain maps to 78–238 (SEIFREKLIA…IIDSPGFQEF (161 aa)). GTP is bound by residues 127 to 130 (NKID) and 180 to 188 (GQSGVGKST). Zn(2+)-binding residues include Cys-262, Cys-267, His-269, and Cys-275.

Belongs to the TRAFAC class YlqF/YawG GTPase family. RsgA subfamily. As to quaternary structure, monomer. Associates with 30S ribosomal subunit, binds 16S rRNA. Zn(2+) is required as a cofactor.

It is found in the cytoplasm. Its function is as follows. One of several proteins that assist in the late maturation steps of the functional core of the 30S ribosomal subunit. Helps release RbfA from mature subunits. May play a role in the assembly of ribosomal proteins into the subunit. Circularly permuted GTPase that catalyzes slow GTP hydrolysis, GTPase activity is stimulated by the 30S ribosomal subunit. The sequence is that of Small ribosomal subunit biogenesis GTPase RsgA from Nitrosomonas europaea (strain ATCC 19718 / CIP 103999 / KCTC 2705 / NBRC 14298).